Here is a 1237-residue protein sequence, read N- to C-terminus: Mediator of RNA polymerase II transcription subunit 5 (1237 aa).

Disordered regions lie at residues 1109–1131 and 1202–1226; these read DDEP…TSNA and HGAQ…ADSG. The segment covering 1119–1131 has biased composition (low complexity); the sequence is HAAANATSHTSNA.

This sequence belongs to the Mediator complex subunit 5 family. Component of the Mediator complex.

The protein resides in the nucleus. Functionally, component of the Mediator complex, a coactivator involved in the regulated transcription of nearly all RNA polymerase II-dependent genes. Mediator functions as a bridge to convey information from gene-specific regulatory proteins to the basal RNA polymerase II transcription machinery. Mediator is recruited to promoters by direct interactions with regulatory proteins and serves as a scaffold for the assembly of a functional preinitiation complex with RNA polymerase II and the general transcription factors. In Mycosarcoma maydis (Corn smut fungus), this protein is Mediator of RNA polymerase II transcription subunit 5 (NUT1).